A 225-amino-acid chain; its full sequence is Phosphatidylserine decarboxylase proenzyme (225 aa).

Serine 188 functions as the Schiff-base intermediate with substrate; via pyruvic acid in the catalytic mechanism. Position 188 is a pyruvic acid (Ser); by autocatalysis (serine 188).

The protein belongs to the phosphatidylserine decarboxylase family. PSD-A subfamily. In terms of assembly, heterodimer of a large membrane-associated beta subunit and a small pyruvoyl-containing alpha subunit. Pyruvate is required as a cofactor. Is synthesized initially as an inactive proenzyme. Formation of the active enzyme involves a self-maturation process in which the active site pyruvoyl group is generated from an internal serine residue via an autocatalytic post-translational modification. Two non-identical subunits are generated from the proenzyme in this reaction, and the pyruvate is formed at the N-terminus of the alpha chain, which is derived from the carboxyl end of the proenzyme. The post-translation cleavage follows an unusual pathway, termed non-hydrolytic serinolysis, in which the side chain hydroxyl group of the serine supplies its oxygen atom to form the C-terminus of the beta chain, while the remainder of the serine residue undergoes an oxidative deamination to produce ammonia and the pyruvoyl prosthetic group on the alpha chain.

Its subcellular location is the cell membrane. It catalyses the reaction a 1,2-diacyl-sn-glycero-3-phospho-L-serine + H(+) = a 1,2-diacyl-sn-glycero-3-phosphoethanolamine + CO2. It participates in phospholipid metabolism; phosphatidylethanolamine biosynthesis; phosphatidylethanolamine from CDP-diacylglycerol: step 2/2. Its function is as follows. Catalyzes the formation of phosphatidylethanolamine (PtdEtn) from phosphatidylserine (PtdSer). This Parvibaculum lavamentivorans (strain DS-1 / DSM 13023 / NCIMB 13966) protein is Phosphatidylserine decarboxylase proenzyme.